A 269-amino-acid polypeptide reads, in one-letter code: NAD kinase (269 aa).

Asp-45 (proton acceptor) is an active-site residue. Residues 45 to 46 (DG), 122 to 123 (NE), Arg-149, Asp-151, and Ala-186 each bind NAD(+).

Belongs to the NAD kinase family. A divalent metal cation is required as a cofactor.

It localises to the cytoplasm. The catalysed reaction is NAD(+) + ATP = ADP + NADP(+) + H(+). In terms of biological role, involved in the regulation of the intracellular balance of NAD and NADP, and is a key enzyme in the biosynthesis of NADP. Catalyzes specifically the phosphorylation on 2'-hydroxyl of the adenosine moiety of NAD to yield NADP. The sequence is that of NAD kinase from Staphylococcus aureus (strain Mu3 / ATCC 700698).